A 2296-amino-acid polypeptide reads, in one-letter code: Protein Ycf2 (2296 aa).

1650–1657 (GSIGIGRS) contributes to the ATP binding site.

The protein belongs to the Ycf2 family.

The protein localises to the plastid. The protein resides in the chloroplast stroma. Its function is as follows. Probable ATPase of unknown function. Its presence in a non-photosynthetic plant (Epifagus virginiana) and experiments in tobacco indicate that it has an essential function which is probably not related to photosynthesis. In Arabis hirsuta (Hairy rock-cress), this protein is Protein Ycf2.